An 850-amino-acid chain; its full sequence is Trimethylguanosine synthase (850 aa).

A disordered region spans residues 54 to 85; it reads NNAGDRVTEEEEDDHSSGTTESHSADEGDLDP. At Thr61 the chain carries Phosphothreonine. Residues Ser92 and Ser152 each carry the phosphoserine modification. Disordered stretches follow at residues 278 to 311, 327 to 454, and 523 to 566; these read DQNA…DNDH, EVEQ…GGIP, and ISQE…PENC. The segment covering 363–374 has biased composition (basic and acidic residues); sequence TPKESDISENRS. Positions 375 to 390 are enriched in polar residues; that stretch reads SDQPAQELQESSGTNT. Phosphoserine occurs at positions 405 and 431. Residues 424-435 show a composition bias toward acidic residues; that stretch reads DIDENPDSEVDD. Basic and acidic residues predominate over residues 548–562; sequence SMEKTDGLMETRDPE. The residue at position 571 (Ser571) is a Phosphoserine. Residues 595–628 form a disordered region; sequence TEGVANSPRAEAEVEIKKKKKKKKKNKNKKINGL. Over residues 611 to 624 the composition is skewed to basic residues; sequence KKKKKKKKKNKNKK. Asp713 serves as a coordination point for S-adenosyl-L-methionine.

This sequence belongs to the methyltransferase superfamily. Trimethylguanosine synthase family. In terms of assembly, may form homooligomers. Interacts with CREBBP/CBP, EED/WAIT1, EP300/P300, NCOA6/PRIP, PPARBP/PBP and SMN. A 55 kDa isoform is widely expressed while a 90 kDa isoform is detected exclusively in brain and testis (at protein level).

Its subcellular location is the cytoplasm. The protein resides in the nucleus. It localises to the cajal body. It is found in the nucleolus. It carries out the reaction a 5'-end (N(7)-methyl 5'-triphosphoguanosine)-ribonucleoside in snRNA + S-adenosyl-L-methionine = a 5'-end (N(2),N(7)-dimethyl 5'-triphosphoguanosine)-ribonucleoside in snRNA + S-adenosyl-L-homocysteine + H(+). The enzyme catalyses a 5'-end (N(7)-methyl 5'-triphosphoguanosine)-ribonucleoside in snoRNA + S-adenosyl-L-methionine = a 5'-end (N(2),N(7)-dimethyl 5'-triphosphoguanosine)-ribonucleoside in snoRNA + S-adenosyl-L-homocysteine + H(+). It catalyses the reaction a 5'-end (N(2),N(7)-dimethyl 5'-triphosphoguanosine)-ribonucleoside in snRNA + S-adenosyl-L-methionine = a 5'-end (N(2),N(2),N(7)-trimethyl 5'-triphosphoguanosine)-ribonucleoside in snRNA + S-adenosyl-L-homocysteine + H(+). The catalysed reaction is a 5'-end (N(2),N(7)-dimethyl 5'-triphosphoguanosine)-ribonucleoside in snoRNA + S-adenosyl-L-methionine = a 5'-end (N(2),N(2),N(7)-trimethyl 5'-triphosphoguanosine)-ribonucleoside in snoRNA + S-adenosyl-L-homocysteine + H(+). In terms of biological role, catalyzes the 2 serial methylation steps for the conversion of the 7-monomethylguanosine (m(7)G) caps of snRNAs and snoRNAs to a 2,2,7-trimethylguanosine (m(2,2,7)G) cap structure. The enzyme is specific for guanine, and N7 methylation must precede N2 methylation. Hypermethylation of the m7G cap of U snRNAs leads to their concentration in nuclear foci, their colocalization with coilin and the formation of canonical Cajal bodies (CBs). Plays a role in transcriptional regulation. The polypeptide is Trimethylguanosine synthase (Rattus norvegicus (Rat)).